Here is a 299-residue protein sequence, read N- to C-terminus: Nitrogenase iron protein (299 aa).

Residue 11–18 (GKGGIGKS) participates in ATP binding. Cys-99 provides a ligand contact to [4Fe-4S] cluster. Arg-102 carries the ADP-ribosylarginine; by dinitrogenase reductase ADP-ribosyltransferase modification. Cys-133 lines the [4Fe-4S] cluster pocket.

This sequence belongs to the NifH/BchL/ChlL family. As to quaternary structure, homodimer. [4Fe-4S] cluster is required as a cofactor. The reversible ADP-ribosylation of Arg-102 inactivates the nitrogenase reductase and regulates nitrogenase activity.

The enzyme catalyses N2 + 8 reduced [2Fe-2S]-[ferredoxin] + 16 ATP + 16 H2O = H2 + 8 oxidized [2Fe-2S]-[ferredoxin] + 2 NH4(+) + 16 ADP + 16 phosphate + 6 H(+). In terms of biological role, the key enzymatic reactions in nitrogen fixation are catalyzed by the nitrogenase complex, which has 2 components: the iron protein and the molybdenum-iron protein. The protein is Nitrogenase iron protein of Methylobacterium nodulans (strain LMG 21967 / CNCM I-2342 / ORS 2060).